We begin with the raw amino-acid sequence, 258 residues long: MMNPLIIKLGGVLLDSEEALERLFSALVNYRESHQRPLVIVHGGGCVVDELMKGLNLPVKKKNGLRVTPADQIDIITGALAGTANKTLLAWAKKHQIAAVGLFLGDGDSVKVTQLDEEFGHVGLAQPGSPKLINSLLENGYLPVVSSIGVTDEGQLMNVNADQAATALAATLGADLILLSDVSGILDGKGQRIAEMTAAKAEQLIEQGIITDGMIVKVNAALDAARTLGRPVDIASWRYAEQLPALFNGMPMGTRILA.

Substrate contacts are provided by residues 44-45 (GG), Arg-66, and Asn-158. ATP contacts are provided by residues 181 to 186 (DVSGIL) and 209 to 211 (IIT).

This sequence belongs to the acetylglutamate kinase family. ArgB subfamily. Homodimer.

The protein resides in the cytoplasm. The catalysed reaction is N-acetyl-L-glutamate + ATP = N-acetyl-L-glutamyl 5-phosphate + ADP. It functions in the pathway amino-acid biosynthesis; L-arginine biosynthesis; N(2)-acetyl-L-ornithine from L-glutamate: step 2/4. In terms of biological role, catalyzes the ATP-dependent phosphorylation of N-acetyl-L-glutamate. The polypeptide is Acetylglutamate kinase (Shigella flexneri serotype 5b (strain 8401)).